The sequence spans 185 residues: HTH-type transcriptional regulator SAB2452 (185 aa).

The HTH tetR-type domain maps to 6–66; sequence IENRQRIEEI…YVIQRDLNTF (61 aa). The segment at residues 29-48 is a DNA-binding region (H-T-H motif); that stretch reads SMNRIAKELGIGMGTLYRHF.

In Staphylococcus aureus (strain bovine RF122 / ET3-1), this protein is HTH-type transcriptional regulator SAB2452.